The following is a 377-amino-acid chain: Guanine nucleotide-binding protein subunit alpha-13 (377 aa).

S-palmitoyl cysteine attachment occurs at residues Cys14 and Cys18. A G-alpha domain is found at 47-377 (RLVKILLLGA…HDNLKQLMLQ (331 aa)). The G1 motif stretch occupies residues 50 to 63 (KILLLGAGESGKST). Residues 58-63 (ESGKST), Ser173, and 197-200 (LLAR) each bind GTP. Mg(2+) is bound at residue Ser62. The tract at residues 195-203 (DILLARRPT) is G2 motif. Thr203 contributes to the Mg(2+) binding site. The residue at position 203 (Thr203) is a Phosphothreonine; by PKA. Residues 218–227 (FKMVDVGGQR) are G3 motif. Positions 287–294 (ILFLNKTD) are G4 motif. GTP contacts are provided by residues 291 to 294 (NKTD) and Ala349. The G5 motif stretch occupies residues 347–352 (TTAINT).

It belongs to the G-alpha family. G(12) subfamily. As to quaternary structure, g proteins are composed of 3 units; alpha, beta and gamma. The alpha chain contains the guanine nucleotide binding site. Interacts with UBXD5. Interacts with HAX1. Interacts (in GTP-bound form) with PPP5C (via TPR repeats); activates PPP5C phosphatase activity and translocates PPP5C to the cell membrane. Interacts with RGS22. Interacts with ARHGEF1. Interacts (in GTP-bound form) with ARHGEF11 (via RGS domain). Interacts (in GTP-bound form) with ARHGEF12 (via RGS domain). Interacts (in GTP-bound form) with CTNND1. Interacts with GAS2L2. Interacts with GPR35. Interacts with GPR174. Palmitoylation is critical for proper membrane localization and signaling. Post-translationally, phosphorylation on Thr-203 by PKA destabilizes the heterotrimer of alpha, beta and gamma, and inhibits Rho activation.

The protein localises to the membrane. Its subcellular location is the melanosome. It localises to the cytoplasm. The protein resides in the nucleus. Its function is as follows. Guanine nucleotide-binding proteins (G proteins) are involved as modulators or transducers in various transmembrane signaling systems. Activates effector molecule RhoA by binding and activating RhoGEFs (ARHGEF1/p115RhoGEF, ARHGEF11/PDZ-RhoGEF and ARHGEF12/LARG). GNA13-dependent Rho signaling subsequently regulates transcription factor AP-1 (activating protein-1). Promotes tumor cell invasion and metastasis by activating RhoA/ROCK signaling pathway. Inhibits CDH1-mediated cell adhesion in process independent from Rho activation. In lymphoid follicles, transmits P2RY8- and S1PR2-dependent signals that lead to inhibition of germinal center (GC) B cell growth and migration outside the GC niche. The polypeptide is Guanine nucleotide-binding protein subunit alpha-13 (Gna13) (Rattus norvegicus (Rat)).